Here is a 397-residue protein sequence, read N- to C-terminus: Acetate kinase (397 aa).

Mg(2+) is bound at residue N7. K14 serves as a coordination point for ATP. R90 lines the substrate pocket. The active-site Proton donor/acceptor is D147. ATP-binding positions include 207-211 (HLGNG), 282-284 (DFR), and 330-334 (GIGEN). E384 is a Mg(2+) binding site.

This sequence belongs to the acetokinase family. Homodimer. Requires Mg(2+) as cofactor. Mn(2+) serves as cofactor.

The protein localises to the cytoplasm. The enzyme catalyses acetate + ATP = acetyl phosphate + ADP. It participates in metabolic intermediate biosynthesis; acetyl-CoA biosynthesis; acetyl-CoA from acetate: step 1/2. Functionally, catalyzes the formation of acetyl phosphate from acetate and ATP. Can also catalyze the reverse reaction. The protein is Acetate kinase of Agathobacter rectalis (strain ATCC 33656 / DSM 3377 / JCM 17463 / KCTC 5835 / VPI 0990) (Eubacterium rectale).